Consider the following 246-residue polypeptide: tRNA (guanine-N(1)-)-methyltransferase (246 aa).

Residues Gly-117 and 137–142 (IGDYVL) contribute to the S-adenosyl-L-methionine site.

The protein belongs to the RNA methyltransferase TrmD family. Homodimer.

The protein resides in the cytoplasm. It carries out the reaction guanosine(37) in tRNA + S-adenosyl-L-methionine = N(1)-methylguanosine(37) in tRNA + S-adenosyl-L-homocysteine + H(+). Functionally, specifically methylates guanosine-37 in various tRNAs. This Acinetobacter baumannii (strain SDF) protein is tRNA (guanine-N(1)-)-methyltransferase.